A 320-amino-acid polypeptide reads, in one-letter code: Acetyl-coenzyme A carboxylase carboxyl transferase subunit alpha (320 aa).

Residues 42 to 295 (IEEKAVQALN…GDAIAAAFAE (254 aa)) enclose the CoA carboxyltransferase C-terminal domain.

Belongs to the AccA family. In terms of assembly, acetyl-CoA carboxylase is a heterohexamer composed of biotin carboxyl carrier protein (AccB), biotin carboxylase (AccC) and two subunits each of ACCase subunit alpha (AccA) and ACCase subunit beta (AccD).

The protein localises to the cytoplasm. The catalysed reaction is N(6)-carboxybiotinyl-L-lysyl-[protein] + acetyl-CoA = N(6)-biotinyl-L-lysyl-[protein] + malonyl-CoA. Its pathway is lipid metabolism; malonyl-CoA biosynthesis; malonyl-CoA from acetyl-CoA: step 1/1. In terms of biological role, component of the acetyl coenzyme A carboxylase (ACC) complex. First, biotin carboxylase catalyzes the carboxylation of biotin on its carrier protein (BCCP) and then the CO(2) group is transferred by the carboxyltransferase to acetyl-CoA to form malonyl-CoA. The sequence is that of Acetyl-coenzyme A carboxylase carboxyl transferase subunit alpha from Rhodopseudomonas palustris (strain HaA2).